A 282-amino-acid chain; its full sequence is Insulin-like growth factor-binding protein 7 (282 aa).

The N-terminal stretch at 1 to 26 is a signal peptide; that stretch reads MERPSLRALLLGAAGLLLLLLPLSSS. In terms of domain architecture, IGFBP N-terminal spans 28-114; it reads SSDTCGPCEP…PGVSGVCVCK (87 aa). 7 cysteine pairs are disulfide-bonded: C32–C57, C35–C59, C40–C60, C48–C63, C71–C87, C81–C111, and C120–C156. A Kazal-like domain is found at 105-158; it reads PGVSGVCVCKSRYPVCGSDGTTYPSGCQLRAASQRAESRGEKAITQVSKGTCEQ. The region spanning 160-264 is the Ig-like C2-type domain; that stretch reads PSIVTPPKDI…GQASASAKIT (105 aa). N171 carries N-linked (GlcNAc...) asparagine glycosylation. A disulfide bridge connects residues C181 and C248. Residue S239 is modified to Phosphoserine; by FAM20C.

As to quaternary structure, may interact with VPS24/CHMP3; the relevance of such interaction however remains unclear. Interacts with CD93; this interaction plays a role in endothelial cells angiogenesis. Post-translationally, N-glycosylated.

The protein localises to the secreted. In terms of biological role, binds IGF1 and IGF2 with a relatively low affinity. Stimulates prostacyclin (PGI2) production. Stimulates cell adhesion. Acts as a ligand for CD93 to play a role in angiogenesis. The chain is Insulin-like growth factor-binding protein 7 (IGFBP7) from Homo sapiens (Human).